Consider the following 166-residue polypeptide: Small ribosomal subunit protein uS5 (166 aa).

Positions 12-75 (YIEKLVQVNR…EAARRNMIQV (64 aa)) constitute an S5 DRBM domain.

It belongs to the universal ribosomal protein uS5 family. As to quaternary structure, part of the 30S ribosomal subunit. Contacts proteins S4 and S8.

In terms of biological role, with S4 and S12 plays an important role in translational accuracy. Its function is as follows. Located at the back of the 30S subunit body where it stabilizes the conformation of the head with respect to the body. In Pseudomonas fluorescens (strain Pf0-1), this protein is Small ribosomal subunit protein uS5.